The primary structure comprises 885 residues: MNSREIRQSFLDFFAGKEHRIVRSAPVIPAEDPTLLFTNAGMNQFKDVFLGKGTREYTRAADTQKCIRASGKHNDLEDVGRDTYHHTFFEMLGNWSFGDYYKKEAIGWAWELMTEVWKLPKERLYATVYHDDEESFKLWQSETDIEHSHILKFGDKDNFWEMGETGPCGPCSEIHIDLTPDGSGGPLVNVGDHRVIELWNLVFIQYDRQADGTLVPLPQKHVDTGMGFERVAAVLQGKSSNYDSDVFAPLFDRITELTGTVYTASLDSPSDIAMRVIADHCRTLTFALSDGAMPGNEGRGYVLRRILRRAVRYAGTLGCHEPIIYKMVEVLVRTMGDVFPELEKQQATVEKIIRAEEESFLVTLGRGTEIFNEVVADMKTAGSTTISGADAFKLYDTFGFPLDLTRLMAAEVGLGIDEAGFEHCMMEQKTRARMDRKGKMQMQDDGGEWQWFAPEAPTTFVGYDMLETEATLVAARVSGDKLLMVLDQTPFYAESGGQVGDHGTLETAGYRLDVTDTRKDGEQIVHVVTSAHDKVRDCAVTPADVSFDGVVSVKAAVDRDRRVATERNHTATHLLHAALRKVLGEHVQQKGSLVTPERLRFDFSHFSKVSAEELEQVEHEVNAEIRKAASVTKHADVPYEEALALGALAFFGDKYADRVRVVEVPGISIELCGGTHVGNIGQIGMVKIVSESSVAAGIRRIEAVTGAAAEALLWQEYRDLQEIKNLLKLKADEEAGPKIKELLEEKKALDKQLQESRLAGLLDRLAASLAGGEEVNGCRIMTERLDGVSGDELRQAAVALRERVPCAVGLLCGVADGKVSLVAFASDEAVKSLKLDAGKLVKEAAASVKGGGGGKLELATAGGKEPAGIDKAIEVFVASVKSALQ.

Zn(2+) contacts are provided by histidine 569, histidine 573, cysteine 672, and histidine 676.

The protein belongs to the class-II aminoacyl-tRNA synthetase family. The cofactor is Zn(2+).

The protein localises to the cytoplasm. The enzyme catalyses tRNA(Ala) + L-alanine + ATP = L-alanyl-tRNA(Ala) + AMP + diphosphate. Functionally, catalyzes the attachment of alanine to tRNA(Ala) in a two-step reaction: alanine is first activated by ATP to form Ala-AMP and then transferred to the acceptor end of tRNA(Ala). Also edits incorrectly charged Ser-tRNA(Ala) and Gly-tRNA(Ala) via its editing domain. The protein is Alanine--tRNA ligase of Chlorobaculum tepidum (strain ATCC 49652 / DSM 12025 / NBRC 103806 / TLS) (Chlorobium tepidum).